We begin with the raw amino-acid sequence, 307 residues long: Ribosomal RNA small subunit methyltransferase H (307 aa).

S-adenosyl-L-methionine-binding positions include 32 to 34 (GGH), Asp52, Phe78, Asp99, and Gln106. The disordered stretch occupies residues 287-307 (KEEIESNKRSHSAKLRVAEKV).

The protein belongs to the methyltransferase superfamily. RsmH family.

Its subcellular location is the cytoplasm. The enzyme catalyses cytidine(1402) in 16S rRNA + S-adenosyl-L-methionine = N(4)-methylcytidine(1402) in 16S rRNA + S-adenosyl-L-homocysteine + H(+). Specifically methylates the N4 position of cytidine in position 1402 (C1402) of 16S rRNA. In Caldicellulosiruptor bescii (strain ATCC BAA-1888 / DSM 6725 / KCTC 15123 / Z-1320) (Anaerocellum thermophilum), this protein is Ribosomal RNA small subunit methyltransferase H.